The following is a 308-amino-acid chain: Electron transfer flavoprotein subunit alpha (308 aa).

252–280 (LYVAVGISGAIQHLAGMKDSKVIVAINKD) serves as a coordination point for FAD.

It belongs to the ETF alpha-subunit/FixB family. Heterodimer of an alpha and a beta subunit. Requires FAD as cofactor.

Its function is as follows. The electron transfer flavoprotein serves as a specific electron acceptor for other dehydrogenases. It transfers the electrons to the main respiratory chain via ETF-ubiquinone oxidoreductase (ETF dehydrogenase). In Paracoccus denitrificans, this protein is Electron transfer flavoprotein subunit alpha (etfA).